Here is a 216-residue protein sequence, read N- to C-terminus: Adenylate kinase (216 aa).

10–15 (GAGKGT) contributes to the ATP binding site. Residues 30 to 59 (STGDMLRAAVKAGTPLGLELKKVMDAGQLV) form an NMP region. Residues Thr31, Arg36, 57 to 59 (QLV), 85 to 88 (GFPR), and Gln92 contribute to the AMP site. The interval 122–159 (GRRVHLASGRTYHIQYNPPKVEGKDDETGEDLIQRDDD) is LID. ATP is bound by residues Arg123 and 132 to 133 (TY). AMP is bound by residues Arg156 and Arg167. Gly202 is an ATP binding site.

This sequence belongs to the adenylate kinase family. As to quaternary structure, monomer.

The protein resides in the cytoplasm. It carries out the reaction AMP + ATP = 2 ADP. It participates in purine metabolism; AMP biosynthesis via salvage pathway; AMP from ADP: step 1/1. Its function is as follows. Catalyzes the reversible transfer of the terminal phosphate group between ATP and AMP. Plays an important role in cellular energy homeostasis and in adenine nucleotide metabolism. The sequence is that of Adenylate kinase from Pseudomonas putida (strain ATCC 700007 / DSM 6899 / JCM 31910 / BCRC 17059 / LMG 24140 / F1).